We begin with the raw amino-acid sequence, 192 residues long: Thymidine kinase (192 aa).

ATP is bound by residues 9–16 (SAMNAGKT) and 88–91 (DECH). Catalysis depends on Glu-89, which acts as the Proton acceptor. Positions 146, 148, 183, and 186 each coordinate Zn(2+).

Belongs to the thymidine kinase family. As to quaternary structure, homotetramer.

The protein resides in the cytoplasm. The catalysed reaction is thymidine + ATP = dTMP + ADP + H(+). The protein is Thymidine kinase of Blochmanniella floridana.